The chain runs to 320 residues: Nicotianamine synthase 1 (320 aa).

The protein belongs to the nicotianamine synthase (NAS)-like family. As to expression, in shoots and roots.

It carries out the reaction 3 S-adenosyl-L-methionine = nicotianamine + 3 S-methyl-5'-thioadenosine + 3 H(+). Functionally, synthesizes nicotianamine, a polyamine which serves as a sensor for the physiological iron status within the plant, and/or might be involved in the transport of iron. The chain is Nicotianamine synthase 1 (NAS1) from Arabidopsis thaliana (Mouse-ear cress).